The primary structure comprises 121 residues: Flagellar protein FliT (121 aa).

Residues 1-50 are required for homodimerization; it reads MNHAPHLYFAWQQLVEKSQLMLRLATEEQWDELIASEMAYVNAVQEIAHL. Residues 60-98 are fliD binding; sequence MQEQLRPMLRLILDNESKVKQLLQIRMDELAKLVGQSSV.

The protein belongs to the FliT family. In terms of assembly, homodimer. Interacts with FliD and FlhC.

It localises to the cytoplasm. Its subcellular location is the cytosol. Its function is as follows. Dual-function protein that regulates the transcription of class 2 flagellar operons and that also acts as an export chaperone for the filament-capping protein FliD. As a transcriptional regulator, acts as an anti-FlhDC factor; it directly binds FlhC, thus inhibiting the binding of the FlhC/FlhD complex to class 2 promoters, resulting in decreased expression of class 2 flagellar operons. As a chaperone, effects FliD transition to the membrane by preventing its premature polymerization, and by directing it to the export apparatus. This Escherichia coli O157:H7 protein is Flagellar protein FliT.